A 194-amino-acid polypeptide reads, in one-letter code: Putative manganese efflux pump MntP (194 aa).

Transmembrane regions (helical) follow at residues 8-28 (LLAI…GIIL), 36-56 (MLIM…LGWL), 61-81 (FSHL…AFLG), 109-129 (MAVA…FLGI), 138-158 (PAGI…IFGI), and 172-192 (LWGG…HLFF).

This sequence belongs to the MntP (TC 9.B.29) family.

It localises to the cell inner membrane. In terms of biological role, probably functions as a manganese efflux pump. This Bacteroides fragilis (strain ATCC 25285 / DSM 2151 / CCUG 4856 / JCM 11019 / LMG 10263 / NCTC 9343 / Onslow / VPI 2553 / EN-2) protein is Putative manganese efflux pump MntP.